Consider the following 205-residue polypeptide: Recombination protein RecR (205 aa).

Residues 58–75 (CSLCQNVTDKEIDPCNIC) form a C4-type zinc finger. The Toprim domain maps to 83 to 182 (RVVCVVEAPN…KVTRIARGIP (100 aa)).

It belongs to the RecR family.

May play a role in DNA repair. It seems to be involved in an RecBC-independent recombinational process of DNA repair. It may act with RecF and RecO. The chain is Recombination protein RecR from Chloroherpeton thalassium (strain ATCC 35110 / GB-78).